The primary structure comprises 241 residues: ATP synthase subunit a (241 aa).

Transmembrane regions (helical) follow at residues 29–49 (NSSFFTMISVILMILFLLFGI), 54–74 (VIPGYLQAAVEYVYDFVISII), 86–106 (IPLIFTVFIFILSCNLVGVLP), 114–134 (HVIVTFALSMVVFIYITIVGF), 153–173 (WLAPIIIIIKLFAYLVRPVSL), 177–197 (LAANMIAGHTIIKVIAGFIVN), 200–220 (IFFTPAPFLFIIALIGFEVFV), and 221–241 (AILQAYIFTILTCVYLSDAVK).

This sequence belongs to the ATPase A chain family. In terms of assembly, F-type ATPases have 2 components, CF(1) - the catalytic core - and CF(0) - the membrane proton channel. CF(1) has five subunits: alpha(3), beta(3), gamma(1), delta(1), epsilon(1). CF(0) has three main subunits: a(1), b(2) and c(9-12). The alpha and beta chains form an alternating ring which encloses part of the gamma chain. CF(1) is attached to CF(0) by a central stalk formed by the gamma and epsilon chains, while a peripheral stalk is formed by the delta and b chains.

Its subcellular location is the cell membrane. In terms of biological role, key component of the proton channel; it plays a direct role in the translocation of protons across the membrane. The chain is ATP synthase subunit a from Wolbachia pipientis wMel.